Consider the following 117-residue polypeptide: Immunoglobulin kappa variable 1D-16 (117 aa).

Residues 1-22 form the signal peptide; that stretch reads MDMRVLAQLLGLLLLCFPGARC. The segment at 23–45 is framework-1; sequence DIQMTQSPSSLSASVGDRVTITC. The Ig-like domain maps to 24–117; sequence IQMTQSPSSL…YYCQQYNSYP (94 aa). A disulfide bridge links C45 with C110. The tract at residues 46-56 is complementarity-determining-1; it reads RASQGISSWLA. The framework-2 stretch occupies residues 57-71; the sequence is WYQQKPEKAPKSLIY. Residues 72–78 are complementarity-determining-2; the sequence is AASSLQS. Residues 79-110 form a framework-3 region; the sequence is GVPSRFSGSGSGTDFTLTISSLQPEDFATYYC. The tract at residues 111–117 is complementarity-determining-3; it reads QQYNSYP.

As to quaternary structure, immunoglobulins are composed of two identical heavy chains and two identical light chains; disulfide-linked.

It is found in the secreted. The protein resides in the cell membrane. Its function is as follows. V region of the variable domain of immunoglobulin light chains that participates in the antigen recognition. Immunoglobulins, also known as antibodies, are membrane-bound or secreted glycoproteins produced by B lymphocytes. In the recognition phase of humoral immunity, the membrane-bound immunoglobulins serve as receptors which, upon binding of a specific antigen, trigger the clonal expansion and differentiation of B lymphocytes into immunoglobulins-secreting plasma cells. Secreted immunoglobulins mediate the effector phase of humoral immunity, which results in the elimination of bound antigens. The antigen binding site is formed by the variable domain of one heavy chain, together with that of its associated light chain. Thus, each immunoglobulin has two antigen binding sites with remarkable affinity for a particular antigen. The variable domains are assembled by a process called V-(D)-J rearrangement and can then be subjected to somatic hypermutations which, after exposure to antigen and selection, allow affinity maturation for a particular antigen. The polypeptide is Immunoglobulin kappa variable 1D-16 (Homo sapiens (Human)).